Here is a 165-residue protein sequence, read N- to C-terminus: Chorismate pyruvate-lyase (165 aa).

Substrate-binding residues include M35, R77, L115, and E156.

The protein belongs to the UbiC family. As to quaternary structure, monomer.

It localises to the cytoplasm. It catalyses the reaction chorismate = 4-hydroxybenzoate + pyruvate. It functions in the pathway cofactor biosynthesis; ubiquinone biosynthesis. In terms of biological role, removes the pyruvyl group from chorismate, with concomitant aromatization of the ring, to provide 4-hydroxybenzoate (4HB) for the ubiquinone pathway. The chain is Chorismate pyruvate-lyase from Escherichia coli O17:K52:H18 (strain UMN026 / ExPEC).